We begin with the raw amino-acid sequence, 110 residues long: Protein RnfH (110 aa).

The interval R86–R110 is disordered. The span at E100–R110 shows a compositional bias: basic and acidic residues.

The protein belongs to the UPF0125 (RnfH) family.

This is Protein RnfH from Paraburkholderia xenovorans (strain LB400).